The sequence spans 238 residues: Uridylate kinase (238 aa).

10 to 13 (KFSG) lines the ATP pocket. The tract at residues 18-23 (GGNGFG) is involved in allosteric activation by GTP. Position 52 (Gly-52) interacts with UMP. 2 residues coordinate ATP: Gly-53 and Arg-57. UMP is bound by residues Asp-73 and 134–141 (TGNPFFTT). The ATP site is built by Thr-161, Tyr-167, and Asp-170.

Belongs to the UMP kinase family. In terms of assembly, homohexamer.

It is found in the cytoplasm. It carries out the reaction UMP + ATP = UDP + ADP. It participates in pyrimidine metabolism; CTP biosynthesis via de novo pathway; UDP from UMP (UMPK route): step 1/1. Its activity is regulated as follows. Allosterically activated by GTP. Inhibited by UTP. In terms of biological role, catalyzes the reversible phosphorylation of UMP to UDP. The protein is Uridylate kinase of Campylobacter fetus subsp. fetus (strain 82-40).